Here is a 399-residue protein sequence, read N- to C-terminus: Elongation factor Tu (399 aa).

The tr-type G domain occupies 10-207; the sequence is KPHVNVGTIG…ALDSYIPEPV (198 aa). Positions 19-26 are G1; that stretch reads GHIDHGKT. Position 19-26 (19-26) interacts with GTP; it reads GHIDHGKT. A Mg(2+)-binding site is contributed by Thr26. Residues 60 to 64 are G2; sequence GITIN. The tract at residues 81–84 is G3; sequence DCPG. GTP contacts are provided by residues 81-85 and 136-139; these read DCPGH and NKVD. The segment at 136–139 is G4; it reads NKVD. The segment at 174–176 is G5; it reads SAL.

It belongs to the TRAFAC class translation factor GTPase superfamily. Classic translation factor GTPase family. EF-Tu/EF-1A subfamily. Monomer.

It localises to the cytoplasm. It carries out the reaction GTP + H2O = GDP + phosphate + H(+). GTP hydrolase that promotes the GTP-dependent binding of aminoacyl-tRNA to the A-site of ribosomes during protein biosynthesis. This chain is Elongation factor Tu, found in Pseudothermotoga lettingae (strain ATCC BAA-301 / DSM 14385 / NBRC 107922 / TMO) (Thermotoga lettingae).